The following is a 1308-amino-acid chain: Receptor tyrosine-protein kinase erbB-4 (1308 aa).

The first 25 residues, M1–S25, serve as a signal peptide directing secretion. Over Q26–L652 the chain is Extracellular. C29 and C56 form a disulfide bridge. N138, N174, and N181 each carry an N-linked (GlcNAc...) asparagine glycan. Cystine bridges form between C156-C186, C189-C197, C193-C205, C213-C221, C217-C229, C230-C238, C234-C246, C249-C258, C262-C289, C293-C304, C308-C323, and C326-C330. N253 is a glycosylation site (N-linked (GlcNAc...) asparagine). Residues N410, N473, and N495 are each glycosylated (N-linked (GlcNAc...) asparagine). 10 cysteine pairs are disulfide-bonded: C503–C512, C507–C520, C523–C532, C536–C552, C555–C569, C559–C577, C580–C589, C593–C614, C617–C625, and C621–C633. An N-linked (GlcNAc...) asparagine glycan is attached at N548. Residue N576 is glycosylated (N-linked (GlcNAc...) asparagine). N620 is a glycosylation site (N-linked (GlcNAc...) asparagine). A transmembrane helix spans residues I653 to V673. Over Y674–V1308 the chain is Cytoplasmic. The Nuclear localization signal signature appears at R676 to R684. Positions L718 to L985 constitute a Protein kinase domain. ATP-binding positions include L724 to V732, K751, Q797 to M799, and D843 to N848. D843 functions as the Proton acceptor in the catalytic mechanism. Y875, Y1035, and Y1056 each carry phosphotyrosine; by autocatalysis. The PPxy motif 1 signature appears at P1032–Y1035. A disordered region spans residues P1117–G1149. Y1150, Y1162, Y1188, Y1202, Y1242, Y1258, and Y1284 each carry phosphotyrosine; by autocatalysis. The PPxY motif 2 signature appears at P1282–L1285. The short motif at L1290 to P1292 is the PDZ-binding element.

This sequence belongs to the protein kinase superfamily. Tyr protein kinase family. EGF receptor subfamily. As to quaternary structure, monomer in the absence of bound ligand. Homodimer or heterodimer with another ERBB family member upon ligand binding, thus forming heterotetramers. Interacts with EGFR and ERBB2. Interacts with DLG2 (via its PDZ domain), DLG3 (via its PDZ domain), DLG4 (via its PDZ domain) and SNTB2 (via its PDZ domain). Interacts with MUC1. Interacts (via its PPxy motifs) with WWOX. Interacts (via the PPxY motif 3 of isoform JM-A CYT-2) with YAP1 (via the WW domain 1 of isoform 1). Interacts (isoform JM-A CYT-1 and isoform JM-B CYT-1) with WWP1. Interacts (via its intracellular domain) with TRIM28. Interacts (via the intracellular domains of both CYT-1 and CYT-2 isoforms) with KAP1; the interaction does not phosphorylate KAP1 but represses ERBB4-mediated transcriptional activity. Interacts with PRPU, DDX23, MATR3, RBM15, ILF3, KAP1, U5S1, U2SURP, ITCH, HNRNPU, AP2A1, NULC, LEO1, WWP2, IGHG1, HXK1, GRB7 and SRRT. Interacts (phosphorylated isoform JM-A CYT-1 and isoform JM-B CYT-1) with PIK3R1. Interacts with SHC1. Interacts with GRB2. Interacts (soluble intracellular domain) with BCL2. Interacts (phosphorylated) with STAT1. Interacts with CBFA2T3. Interacts (soluble intracellular domain) with STAT5A. In terms of processing, isoform JM-A CYT-1 and isoform JM-A CYT-2 are processed by ADAM17. Proteolytic processing in response to ligand or 12-O-tetradecanoylphorbol-13-acetate stimulation results in the production of 120 kDa soluble receptor forms and intermediate membrane-anchored 80 kDa fragments (m80HER4), which are further processed by a presenilin-dependent gamma-secretase to release a cytoplasmic intracellular domain (E4ICD; E4ICD1/s80Cyt1 or E4ICD2/s80Cyt2, depending on the isoform). Membrane-anchored 80 kDa fragments of the processed isoform JM-A CYT-1 are more readily degraded by the proteasome than fragments of isoform JM-A CYT-2, suggesting a prevalence of E4ICD2 over E4ICD1. Isoform JM-B CYT-1 and isoform JM-B CYT-2 lack the ADAM17 cleavage site and are not processed by ADAM17, precluding further processing by gamma-secretase. Post-translationally, autophosphorylated on tyrosine residues in response to ligand binding. Autophosphorylation occurs in trans, i.e. one subunit of the dimeric receptor phosphorylates tyrosine residues on the other subunit. Ligands trigger phosphorylation at specific tyrosine residues, thereby creating binding sites for scaffold proteins and effectors. Constitutively phosphorylated at a basal level when overexpressed in heterologous systems; ligand binding leads to increased phosphorylation. Phosphorylation at Tyr-1035 is important for interaction with STAT1. Phosphorylation at Tyr-1056 is important for interaction with PIK3R1. Phosphorylation at Tyr-1242 is important for interaction with SHC1. Phosphorylation at Tyr-1188 may also contribute to the interaction with SHC1. Isoform JM-A CYT-2 is constitutively phosphorylated on tyrosine residues in a ligand-independent manner. E4ICD2 but not E4ICD1 is phosphorylated on tyrosine residues. Ubiquitinated. During mitosis, the ERBB4 intracellular domain is ubiquitinated by the APC/C complex and targeted to proteasomal degradation. Isoform JM-A CYT-1 and isoform JM-B CYT-1 are ubiquitinated by WWP1. The ERBB4 intracellular domain (E4ICD1) is ubiquitinated, and this involves NEDD4. Isoform JM-A CYT-2 and isoform JM-B CYT-2 are expressed in cerebellum, cerebral cortex, spinal cord, medulla oblongata and eye, but the kidney expresses solely isoform JM-A CYT-2 and the heart solely isoform JM-B CYT-2.

The protein localises to the cell membrane. Its subcellular location is the nucleus. It is found in the mitochondrion. The enzyme catalyses L-tyrosyl-[protein] + ATP = O-phospho-L-tyrosyl-[protein] + ADP + H(+). Binding of a cognate ligand leads to dimerization and activation by autophosphorylation on tyrosine residues. In vitro kinase activity is increased by Mg(2+). Tyrosine-protein kinase that plays an essential role as cell surface receptor for neuregulins and EGF family members and regulates development of the heart, the central nervous system and the mammary gland, gene transcription, cell proliferation, differentiation, migration and apoptosis. Required for normal cardiac muscle differentiation during embryonic development, and for postnatal cardiomyocyte proliferation. Required for normal development of the embryonic central nervous system, especially for normal neural crest cell migration and normal axon guidance. Required for mammary gland differentiation, induction of milk proteins and lactation. Acts as cell-surface receptor for the neuregulins NRG1, NRG2, NRG3 and NRG4 and the EGF family members BTC, EREG and HBEGF. Ligand binding triggers receptor dimerization and autophosphorylation at specific tyrosine residues that then serve as binding sites for scaffold proteins and effectors. Ligand specificity and signaling is modulated by alternative splicing, proteolytic processing, and by the formation of heterodimers with other ERBB family members, thereby creating multiple combinations of intracellular phosphotyrosines that trigger ligand- and context-specific cellular responses. Mediates phosphorylation of SHC1 and activation of the MAP kinases MAPK1/ERK2 and MAPK3/ERK1. Isoform JM-A CYT-1 and isoform JM-B CYT-1 phosphorylate PIK3R1, leading to the activation of phosphatidylinositol 3-kinase and AKT1 and protect cells against apoptosis. Isoform JM-A CYT-1 and isoform JM-B CYT-1 mediate reorganization of the actin cytoskeleton and promote cell migration in response to NRG1. Isoform JM-A CYT-2 and isoform JM-B CYT-2 lack the phosphotyrosine that mediates interaction with PIK3R1, and hence do not phosphorylate PIK3R1, do not protect cells against apoptosis, and do not promote reorganization of the actin cytoskeleton and cell migration. Proteolytic processing of isoform JM-A CYT-1 and isoform JM-A CYT-2 gives rise to the corresponding soluble intracellular domains (4ICD) that translocate to the nucleus, promote nuclear import of STAT5A, activation of STAT5A, mammary epithelium differentiation, cell proliferation and activation of gene expression. The ERBB4 soluble intracellular domains (4ICD) colocalize with STAT5A at the CSN2 promoter to regulate transcription of milk proteins during lactation. The ERBB4 soluble intracellular domains can also translocate to mitochondria and promote apoptosis. This is Receptor tyrosine-protein kinase erbB-4 (Erbb4) from Mus musculus (Mouse).